The primary structure comprises 502 residues: ATP synthase subunit alpha (502 aa).

ATP is bound at residue 169 to 176; the sequence is GDRQTGKT.

This sequence belongs to the ATPase alpha/beta chains family. In terms of assembly, F-type ATPases have 2 components, CF(1) - the catalytic core - and CF(0) - the membrane proton channel. CF(1) has five subunits: alpha(3), beta(3), gamma(1), delta(1), epsilon(1). CF(0) has three main subunits: a(1), b(2) and c(9-12). The alpha and beta chains form an alternating ring which encloses part of the gamma chain. CF(1) is attached to CF(0) by a central stalk formed by the gamma and epsilon chains, while a peripheral stalk is formed by the delta and b chains.

It is found in the cell membrane. It catalyses the reaction ATP + H2O + 4 H(+)(in) = ADP + phosphate + 5 H(+)(out). In terms of biological role, produces ATP from ADP in the presence of a proton gradient across the membrane. The alpha chain is a regulatory subunit. The sequence is that of ATP synthase subunit alpha from Bacillus velezensis (strain DSM 23117 / BGSC 10A6 / LMG 26770 / FZB42) (Bacillus amyloliquefaciens subsp. plantarum).